The sequence spans 1933 residues: Protein TIC 214 (1933 aa).

6 helical membrane-spanning segments follow: residues 18–38 (IVNS…FSIG), 60–80 (ATTG…YAPL), 87–107 (PHTI…FYTD), 128–148 (FSIQ…HFIL), 176–196 (VGWL…LVWI), and 230–250 (IFYI…PAPL). Disordered regions lie at residues 266–291 (AKGK…VGVG), 473–514 (KTKS…SRDN), 808–832 (THRE…AEDP), and 1066–1121 (ESFT…SSNA). The span at 278-289 (EEGDVEKEDEVG) shows a compositional bias: acidic residues. Residues 476 to 487 (SLSPEKTSGDNL) show a composition bias toward polar residues. Basic and acidic residues-rich tracts occupy residues 488-514 (ETSR…SRDN) and 819-832 (DEKN…AEDP). Residues 1066–1078 (ESFTQISSPSSTN) are compositionally biased toward polar residues. Basic residues predominate over residues 1105-1115 (KEKKKKKRSLK). A helical membrane pass occupies residues 1135–1155 (LPVYLKLFIQRIYTGIFFSII). Residues 1562–1642 (NADNEKNEKK…SAESTTKKVT (81 aa)) form a disordered region. Positions 1564-1642 (DNEKNEKKEA…SAESTTKKVT (79 aa)) are enriched in basic and acidic residues.

The protein belongs to the TIC214 family. Part of the Tic complex.

It localises to the plastid. The protein localises to the chloroplast inner membrane. Involved in protein precursor import into chloroplasts. May be part of an intermediate translocation complex acting as a protein-conducting channel at the inner envelope. This is Protein TIC 214 from Jasminum nudiflorum (Winter jasmine).